A 597-amino-acid chain; its full sequence is 2-succinyl-5-enolpyruvyl-6-hydroxy-3-cyclohexene-1-carboxylate synthase (597 aa).

The protein belongs to the TPP enzyme family. MenD subfamily. In terms of assembly, homodimer. Mg(2+) is required as a cofactor. The cofactor is Mn(2+). It depends on thiamine diphosphate as a cofactor.

It catalyses the reaction isochorismate + 2-oxoglutarate + H(+) = 5-enolpyruvoyl-6-hydroxy-2-succinyl-cyclohex-3-ene-1-carboxylate + CO2. It participates in quinol/quinone metabolism; 1,4-dihydroxy-2-naphthoate biosynthesis; 1,4-dihydroxy-2-naphthoate from chorismate: step 2/7. Its pathway is cofactor biosynthesis; phylloquinone biosynthesis. Catalyzes the thiamine diphosphate-dependent decarboxylation of 2-oxoglutarate and the subsequent addition of the resulting succinic semialdehyde-thiamine pyrophosphate anion to isochorismate to yield 2-succinyl-5-enolpyruvyl-6-hydroxy-3-cyclohexene-1-carboxylate (SEPHCHC). This Synechococcus sp. (strain JA-3-3Ab) (Cyanobacteria bacterium Yellowstone A-Prime) protein is 2-succinyl-5-enolpyruvyl-6-hydroxy-3-cyclohexene-1-carboxylate synthase.